The following is a 202-amino-acid chain: MCTGGCARCLGGTLIPLAVFGLLANILLFFPGGKVVNDKSHLSDEVWYFGGILGSGVLMIFPALVFLGLQNNDCCGCCGNEGCGKRFAMFTSTLFAVIGFLGAGYSFIVSAVSINKGPKCFMANGTWGYPFHDGDYLKDQALWSECEEPRDVVPWNLTLFSILLVIGGIQMVLCAIQVINGLLGTLCGDCQCCGCCGGDGPV.

Over 1–9 (MCTGGCARC) the chain is Cytoplasmic. A helical transmembrane segment spans residues 10-30 (LGGTLIPLAVFGLLANILLFF). Topologically, residues 31–48 (PGGKVVNDKSHLSDEVWY) are extracellular. The chain crosses the membrane as a helical span at residues 49 to 69 (FGGILGSGVLMIFPALVFLGL). The Cytoplasmic segment spans residues 70–93 (QNNDCCGCCGNEGCGKRFAMFTST). The chain crosses the membrane as a helical span at residues 94–114 (LFAVIGFLGAGYSFIVSAVSI). Residues 115-158 (NKGPKCFMANGTWGYPFHDGDYLKDQALWSECEEPRDVVPWNLT) lie on the Extracellular side of the membrane. Residue Asn-156 is glycosylated (N-linked (GlcNAc...) asparagine). The chain crosses the membrane as a helical span at residues 159–179 (LFSILLVIGGIQMVLCAIQVI). Over 180 to 202 (NGLLGTLCGDCQCCGCCGGDGPV) the chain is Cytoplasmic.

The protein belongs to the L6 tetraspanin family.

It localises to the membrane. Regulates the adhesive and proliferative status of intestinal epithelial cells. Can mediate density-dependent cell proliferation. This chain is Transmembrane 4 L6 family member 4 (Tm4sf4), found in Mus musculus (Mouse).